A 99-amino-acid polypeptide reads, in one-letter code: NADH-quinone oxidoreductase subunit K (99 aa).

3 consecutive transmembrane segments (helical) span residues 3 to 23 (PMYY…GVLL), 28 to 48 (IIVF…LVTF), and 62 to 82 (FFVM…IVAI).

The protein belongs to the complex I subunit 4L family. NDH-1 is composed of 14 different subunits. Subunits NuoA, H, J, K, L, M, N constitute the membrane sector of the complex.

It is found in the cell membrane. It catalyses the reaction a quinone + NADH + 5 H(+)(in) = a quinol + NAD(+) + 4 H(+)(out). In terms of biological role, NDH-1 shuttles electrons from NADH, via FMN and iron-sulfur (Fe-S) centers, to quinones in the respiratory chain. The immediate electron acceptor for the enzyme in this species is believed to be a menaquinone. Couples the redox reaction to proton translocation (for every two electrons transferred, four hydrogen ions are translocated across the cytoplasmic membrane), and thus conserves the redox energy in a proton gradient. The sequence is that of NADH-quinone oxidoreductase subunit K from Acidothermus cellulolyticus (strain ATCC 43068 / DSM 8971 / 11B).